The chain runs to 302 residues: MVEPVQEYRLVLVTGPSGAGRTTAINALEDMGYEVIDNLPLSFVPRLIEGPSIGRPIALGLDVRNRDFNATALIELIDRLTQDPRVALEVLYVDCSASELIRRYNQTRRRHPLAPAETPAEGVEREIDLLAPVRVRADHLIDTSEMSPHDLKAELSRWFDRGAATRLAVSVQSFSYKRGVPRGVDMIFDCRFLKNPYWVESLRALDGREASVADYISSDPRFAPFFEKLRDLVLFLLPAQLEEGKAHLSLGFGCTGGQHRSVAVAELLGNALAEAGWPVSKRHRELERRAAAVLPTHQGEKA.

15–22 contributes to the ATP binding site; that stretch reads GPSGAGRT. Residue 62–65 participates in GTP binding; the sequence is DVRN.

Belongs to the RapZ-like family.

Displays ATPase and GTPase activities. The sequence is that of Nucleotide-binding protein RHOS4_02640 from Cereibacter sphaeroides (strain ATCC 17023 / DSM 158 / JCM 6121 / CCUG 31486 / LMG 2827 / NBRC 12203 / NCIMB 8253 / ATH 2.4.1.) (Rhodobacter sphaeroides).